Here is a 255-residue protein sequence, read N- to C-terminus: 5'-nucleotidase SurE (255 aa).

The a divalent metal cation site is built by Asp-8, Asp-9, Ser-40, and Asn-93.

It belongs to the SurE nucleotidase family. The cofactor is a divalent metal cation.

It localises to the cytoplasm. It catalyses the reaction a ribonucleoside 5'-phosphate + H2O = a ribonucleoside + phosphate. Nucleotidase that shows phosphatase activity on nucleoside 5'-monophosphates. The protein is 5'-nucleotidase SurE of Rhodopseudomonas palustris (strain ATCC BAA-98 / CGA009).